The chain runs to 702 residues: Methionine--tRNA ligase (702 aa).

Residues 23–33 (PYANGPLHLGH) carry the 'HIGH' region motif. Zn(2+)-binding residues include Cys-154, Cys-157, Cys-167, and Cys-170. The short motif at 341–345 (KMSKS) is the 'KMSKS' region element. Lys-344 serves as a coordination point for ATP. Positions 562-593 (LAPPPASAKQQNASMSNTAPPPTAEEPETTAP) are disordered. Polar residues predominate over residues 569–578 (AKQQNASMSN). Residues 599 to 702 (DFAKLDLRIG…SSAQPGMPVR (104 aa)) form the tRNA-binding domain.

This sequence belongs to the class-I aminoacyl-tRNA synthetase family. MetG type 1 subfamily. As to quaternary structure, homodimer. The cofactor is Zn(2+).

The protein localises to the cytoplasm. It catalyses the reaction tRNA(Met) + L-methionine + ATP = L-methionyl-tRNA(Met) + AMP + diphosphate. Is required not only for elongation of protein synthesis but also for the initiation of all mRNA translation through initiator tRNA(fMet) aminoacylation. The protein is Methionine--tRNA ligase of Xylella fastidiosa (strain M23).